A 181-amino-acid chain; its full sequence is ABC transporter E family member 3 (181 aa).

An ABC transporter domain is found at 20–176; the sequence is SQIIVMLGEN…KAAFARFHNG (157 aa). 27–34 is a binding site for ATP; the sequence is GENGTGKT.

This sequence belongs to the ABC transporter superfamily. ABCE family. In terms of tissue distribution, mostly expressed in roots and leaves, and, to a lower extent, in stems, flowers and siliques.

This Arabidopsis thaliana (Mouse-ear cress) protein is ABC transporter E family member 3 (ABCE3).